The sequence spans 166 residues: Lipoprotein signal peptidase (166 aa).

A run of 4 helical transmembrane segments spans residues 11–31, 42–62, 67–87, and 90–110; these read VWLW…TLVV, LLPV…SFLS, WQRW…VWWL, and LPAT…GAIG. Catalysis depends on residues aspartate 123 and aspartate 141. Residues 133 to 153 traverse the membrane as a helical segment; that stretch reads HFPVFNVADCAICIGAALLLF.

This sequence belongs to the peptidase A8 family.

The protein localises to the cell inner membrane. It carries out the reaction Release of signal peptides from bacterial membrane prolipoproteins. Hydrolyzes -Xaa-Yaa-Zaa-|-(S,diacylglyceryl)Cys-, in which Xaa is hydrophobic (preferably Leu), and Yaa (Ala or Ser) and Zaa (Gly or Ala) have small, neutral side chains.. It participates in protein modification; lipoprotein biosynthesis (signal peptide cleavage). In terms of biological role, this protein specifically catalyzes the removal of signal peptides from prolipoproteins. In Pseudoalteromonas translucida (strain TAC 125), this protein is Lipoprotein signal peptidase.